Consider the following 258-residue polypeptide: UPF0246 protein YaaA (258 aa).

The protein belongs to the UPF0246 family.

This Shigella flexneri serotype 5b (strain 8401) protein is UPF0246 protein YaaA.